A 1008-amino-acid polypeptide reads, in one-letter code: MAAAEAPSLREQPEMEDANSEKSVNEENGEVSEDQSQNKHSRHKKKKHKHRSKHKKHKHSSEEDKDRKHKHKHKHKKHKRKEVADASDKEGMSPAKRTKLDDLALLEDLEKQRALIKAELDNELMEGKVQSGMGLILQGYESGSEEEGEIHEKARNGNRSSTRSSSTKGKLELVDNKNSTKKRSKSRSKERTRHRSDKKKSKGGVEIVKEKATRSKSKERKKSKSPSKRSKSQDEARKSKSPTLRRRSQEKVGKARSPVDDKAKVEDKSKAKDRKKSPVINESRSRDRGKKSRSPVDLRGKSKDRRSRSKERKSKRPEADKEKKPVKSPSKDASSGKENRSPSRRPGRSPKRRSLSPKQRDKSRRSRSPLVNDRRSKQSKSPSRTLSPGRRAKSRSLERKRREPERRRLSSPRTRPRDDILSRRERSKDASPISRWSPARRRASRSPVRRRSRSPLRRSRSPRRRSRSPRRRDRGRRSRSRLRRRSRSRGGRRRRSRSKVKEDKFKGSLSEGMKVEQESSSDDNLEDFDVEEEDEEALIEQRRIQRQAIVQKYKYLADDSNLSVPSEPSSPQSSTRSRSPSPDDILERVAADVKEYERENVDTFEASVKAKHNLMAVEQNNGSSQKKLLAPDMFTESDDMFAAYFDSARLRAAGIGKDFKENPNLRDNWTDAEGYYRVNIGEVLDKRYNVYGYTGQGVFSNVVRARDNARANQEVAVKIIRNNELMQKTGLKELEFLKKLNDADPDDKFHCLRLFRHFYHKQHLCLVFEPLSMNLREVLKKYGKDVGLHIKAVRSYSQQLFLALKLLKRCNILHADIKPDNILVNESKTILKLCDFGSASHVADNDITPYLVSRFYRAPEIIIGKSYDYGIDMWSVGCTLYELYTGKILFPGKTNNHMLKLAMDLKGKMPNKMIRKGVFKDQHFDQNLNFMYIEVDKVTEREKVTVMSTINPTKDLLADLIGCQRLPEDQRKKVHQLKDLLDQILMLDPAKRISINQALQHAFIQEKI.

Residues 1-103 (MAAAEAPSLR…PAKRTKLDDL (103 aa)) form a disordered region. Alanine 2 carries the post-translational modification N-acetylalanine. 4 positions are modified to phosphoserine: serine 8, serine 20, serine 23, and serine 32. Basic residues-rich tracts occupy residues 39–59 (KHSR…KHKH) and 67–81 (RKHK…HKRK). A compositionally biased stretch (basic and acidic residues) spans 82–91 (EVADASDKEG). Phosphoserine occurs at positions 87 and 93. Position 99 is an N6-acetyllysine; alternate (lysine 99). Lysine 99 is covalently cross-linked (Glycyl lysine isopeptide (Lys-Gly) (interchain with G-Cter in SUMO2); alternate). Residue lysine 111 forms a Glycyl lysine isopeptide (Lys-Gly) (interchain with G-Cter in SUMO2) linkage. A Glycyl lysine isopeptide (Lys-Gly) (interchain with G-Cter in SUMO2); alternate cross-link involves residue lysine 117. Residue lysine 117 forms a Glycyl lysine isopeptide (Lys-Gly) (interchain with G-Cter in SUMO1); alternate linkage. Position 131 is a phosphoserine (serine 131). A Phosphotyrosine modification is found at tyrosine 140. Disordered regions lie at residues 140 to 536 (YESG…EDEE) and 560 to 584 (SNLS…SPDD). Phosphoserine occurs at positions 142, 144, and 166. Positions 157–168 (GNRSSTRSSSTK) are enriched in low complexity. Glycyl lysine isopeptide (Lys-Gly) (interchain with G-Cter in SUMO2) cross-links involve residues lysine 170 and lysine 177. 2 stretches are compositionally biased toward basic residues: residues 179 to 202 (STKK…KKSK) and 214 to 230 (RSKS…SKRS). Phosphoserine occurs at positions 239, 241, 257, 277, 283, 292, and 294. Residues 247 to 270 (RSQEKVGKARSPVDDKAKVEDKSK) show a composition bias toward basic and acidic residues. A compositionally biased stretch (basic residues) spans 302-315 (SKDRRSRSKERKSK). Basic and acidic residues predominate over residues 316–325 (RPEADKEKKP). Residues serine 328, serine 354, serine 356, serine 366, and serine 368 each carry the phosphoserine modification. Residues 342-367 (PSRRPGRSPKRRSLSPKQRDKSRRSR) are compositionally biased toward basic residues. A Phosphothreonine modification is found at threonine 385. Phosphoserine is present on serine 387. Basic and acidic residues-rich tracts occupy residues 395–408 (RSLE…ERRR) and 415–429 (RPRD…RSKD). Phosphoserine is present on residues serine 427, serine 431, and serine 437. Residues 438–498 (PARRRASRSP…RGGRRRRSRS (61 aa)) show a composition bias toward basic residues. Phosphoserine occurs at positions 519, 520, 521, 566, 570, 577, 579, and 581. The span at 519-536 (SSSDDNLEDFDVEEEDEE) shows a compositional bias: acidic residues. Residues 563-582 (SVPSEPSSPQSSTRSRSPSP) are compositionally biased toward low complexity. Residues lysine 594 and lysine 660 each participate in a glycyl lysine isopeptide (Lys-Gly) (interchain with G-Cter in SUMO2) cross-link. A Protein kinase domain is found at 688 to 1004 (YNVYGYTGQG…INQALQHAFI (317 aa)). ATP is bound by residues 694–702 (TGQGVFSNV) and lysine 718. Lysine 718 is modified (N6-acetyllysine). The Proton acceptor role is filled by aspartate 816. Phosphotyrosine is present on tyrosine 850. The residue at position 853 (serine 853) is a Phosphoserine.

This sequence belongs to the protein kinase superfamily. CMGC Ser/Thr protein kinase family. Interacts with CLK1 C-terminus. Associates with the U5 snRNP and NCOR1 deacetylase complexes. Identified in the spliceosome C complex. In terms of processing, phosphorylated by CLK1. Autophosphorylated; phosphorylation inhibits interaction with its targets, such as PRPF6 or SMARCA4.

The protein localises to the nucleus. Its subcellular location is the chromosome. It is found in the centromere. It localises to the kinetochore. It catalyses the reaction L-seryl-[protein] + ATP = O-phospho-L-seryl-[protein] + ADP + H(+). The enzyme catalyses L-threonyl-[protein] + ATP = O-phospho-L-threonyl-[protein] + ADP + H(+). In terms of biological role, serine/threonine kinase involved in spliceosomal assembly as well as mitosis and signaling regulation. Connects chromatin mediated regulation of transcription and pre-mRNA splicing. During spliceosomal assembly, interacts with and phosphorylates PRPF6 and PRPF31, components of the U4/U6-U5 tri-small nuclear ribonucleoprotein (snRNP), to facilitate the formation of the spliceosome B complex. Plays a role in regulating transcription and the spindle assembly checkpoint (SAC). Associates with U5 snRNP and NCOR1 deacetylase complexes which may allow a coordination of pre-mRNA splicing with chromatin remodeling events involved in transcriptional regulation. Associates and probably phosphorylates SMARCA4 and NCOR1. Phosphorylates SRSF1. Associates with kinetochores during mitosis and is necessary for recruitment and maintenance of the checkpoint proteins such as MAD1L1 and MAD12L1 at the kinetochores. Phosphorylates and regulates the activity of the transcription factors such as ELK1 and KLF13. Phosphorylates nuclear YAP1 and WWTR1/TAZ which induces nuclear exclusion and regulates Hippo signaling pathway, involved in tissue growth control. In Bos taurus (Bovine), this protein is Serine/threonine-protein kinase PRP4 homolog (PRP4K).